The following is a 114-amino-acid chain: uncharacterized protein (114 aa).

3 helical membrane passes run leucine 21–phenylalanine 41, glycine 65–isoleucine 85, and leucine 93–aspartate 113.

The protein resides in the membrane. This is an uncharacterized protein from Saccharomyces cerevisiae (strain ATCC 204508 / S288c) (Baker's yeast).